We begin with the raw amino-acid sequence, 131 residues long: Small ribosomal subunit protein uS10m (131 aa).

The protein belongs to the universal ribosomal protein uS10 family.

Its subcellular location is the mitochondrion. This chain is Small ribosomal subunit protein uS10m (mrps10), found in Dictyostelium discoideum (Social amoeba).